The sequence spans 117 residues: Ribonuclease P protein component (117 aa).

It belongs to the RnpA family. As to quaternary structure, consists of a catalytic RNA component (M1 or rnpB) and a protein subunit.

It carries out the reaction Endonucleolytic cleavage of RNA, removing 5'-extranucleotides from tRNA precursor.. In terms of biological role, RNaseP catalyzes the removal of the 5'-leader sequence from pre-tRNA to produce the mature 5'-terminus. It can also cleave other RNA substrates such as 4.5S RNA. The protein component plays an auxiliary but essential role in vivo by binding to the 5'-leader sequence and broadening the substrate specificity of the ribozyme. The protein is Ribonuclease P protein component of Thermotoga sp. (strain RQ2).